Consider the following 412-residue polypeptide: Argininosuccinate synthase (412 aa).

ATP is bound by residues Ala-24–Ser-32 and Ala-50. L-citrulline contacts are provided by Tyr-103 and Ser-108. Gly-132 contacts ATP. Residues Thr-134, Asn-138, and Asp-139 each coordinate L-aspartate. Asn-138 provides a ligand contact to L-citrulline. Arg-142 lines the L-citrulline pocket.

This sequence belongs to the argininosuccinate synthase family. Type 1 subfamily. In terms of assembly, homotetramer.

Its subcellular location is the cytoplasm. The enzyme catalyses L-citrulline + L-aspartate + ATP = 2-(N(omega)-L-arginino)succinate + AMP + diphosphate + H(+). Its pathway is amino-acid biosynthesis; L-arginine biosynthesis; L-arginine from L-ornithine and carbamoyl phosphate: step 2/3. This Xanthomonas axonopodis pv. citri (strain 306) protein is Argininosuccinate synthase.